A 158-amino-acid chain; its full sequence is C-type lectin mannose-binding isoform (158 aa).

The signal sequence occupies residues 1-23; that stretch reads MGRFLLVTLSLLVGAFSLNEANS. 4 disulfide bridges follow: Cys26/Cys37, Cys54/Cys154, Cys61/Cys156, and Cys129/Cys146. A C-type lectin domain is found at 33–155; it reads KNGFCYKVFN…CKALYSFICQ (123 aa). Positions 119–121 match the Mannose-binding motif; that stretch reads EPN. A glycan (N-linked (GlcNAc...) asparagine) is linked at Asn121. The Ca(2+) site is built by Glu127, Asn142, and Asp143.

Belongs to the true venom lectin family. In terms of assembly, dimer. Probably disulfide-linked homodimer. As to expression, expressed by the venom gland.

It localises to the secreted. In terms of biological role, mannose-binding lectin that binds to and agglutinates rabbit (but not human) erythrocytes in a calcium-dependent manner. This Oxyuranus scutellatus (Coastal taipan) protein is C-type lectin mannose-binding isoform.